The primary structure comprises 1038 residues: Dorsal-ventral patterning protein Sog (1038 aa).

The Cytoplasmic portion of the chain corresponds to 1–53 (MANKLRKSNAIEWATATGTVPLLERSCCHSEDAALEPQASKTSHREQAPILRH). Residues 54–74 (LSQLSHLLIIAGLLIVCLAGV) traverse the membrane as a helical; Signal-anchor for type II membrane protein segment. Over 75–1038 (TEGRRHAPLM…QPHHQQRSSS (964 aa)) the chain is Extracellular. The VWFC 1 domain maps to 100-175 (TECQFGKVLR…LPGKCCKTCP (76 aa)). N-linked (GlcNAc...) asparagine glycosylation is found at asparagine 179 and asparagine 287. CHRD domains are found at residues 197–337 (NMKH…KYTA), 339–471 (QTEL…TRAS), 474–588 (IFQT…PRPV), and 592–713 (RDSA…STKV). N-linked (GlcNAc...) asparagine glycans are attached at residues asparagine 520, asparagine 666, asparagine 752, and asparagine 821. The region spanning 742 to 804 (TKCFHSGRFY…RDGECCPSCV (63 aa)) is the VWFC 2 domain. 2 VWFC domains span residues 830–899 (RGCR…KICP) and 939–1020 (GGCK…TQCR).

The protein belongs to the chordin family. In terms of assembly, component of a complex composed of dpp, sog and tsg. Interacts with palmitoyltransferase Hip14. Palmitoylated, probably by Hip14. Post-translationally, cleaved by metalloproteases tok and tld. Cleavage by tok during pupal development contributes to specification of the posterior crossvein in the wing. In terms of tissue distribution, abuts the dorsal dpp-expressing cells in a lateral stripe 14-16 cells wide. Later in embryogenesis it is expressed in neuroectoderm and in the endoderm spaced along the anterior-posterior axis of the developing gut.

Its subcellular location is the golgi apparatus membrane. The protein localises to the cell membrane. It is found in the secreted. Putative negative growth factor. Antagonist of dpp, a protein involved in patterning the dorsal region and in the development of the neuroectoderm; dpp inhibition is enhanced by tsg. Required for establishment of a narrow stripe of peak levels of BMP signaling in the dorsal midline of early embryos, that will give rise to the amnioserosa. During pupal development, plays a role in specification of the posterior crossvein in the wing. Exhibits both agonist and antagonist activities towards BMP signaling during pupal wing patterning. The chain is Dorsal-ventral patterning protein Sog (sog) from Drosophila melanogaster (Fruit fly).